A 720-amino-acid chain; its full sequence is Transcriptional regulator EFH1 (720 aa).

Polar residues-rich tracts occupy residues 1-15 and 22-35; these read MNGIMTTSSHSNFYN and PSSSDHIPGPSSQD. Disordered regions lie at residues 1 to 111, 181 to 223, 245 to 336, and 365 to 437; these read MNGI…SSST, SFQM…HQSQ, QKEF…TIAT, and YQRQ…PQPD. Residues 71–105 show a composition bias toward low complexity; that stretch reads QQNQSESQQSRQSHHLQQQQQQQQQQQQNQHNQQN. Residues 181–200 are compositionally biased toward polar residues; that stretch reads SFQMGSVSTPDTQNSSIRSK. The segment covering 201–223 has biased composition (low complexity); the sequence is QQQQHSYQQQQPQQLSQSQHQSQ. Positions 254 to 266 are enriched in polar residues; that stretch reads GDQTLVPQTNSKL. Positions 267–304 are enriched in low complexity; sequence QQQISETSYSQQQQQQQSPPTPQKQQQQQHYQHQTTQP. The span at 313-336 shows a compositional bias: polar residues; it reads YSQTGGPSSSPVAGNISIPTTIAT. Low complexity predominate over residues 366-399; the sequence is QRQQQQQQQHQQPQSQQMSQISQLSQQIPPQGSS. Residues 400–413 are compositionally biased toward polar residues; that stretch reads KNISINSTPTKSRA. Positions 414–433 are enriched in low complexity; sequence SSITTRSGRQSRSTSISSFI. Residues 446–552 form the HTH APSES-type domain; sequence KVATTRWDDE…KNIKQYFLTK (107 aa). The segment at residues 480–501 is a DNA-binding region (H-T-H motif); the sequence is GTKLLNVIGMTRGKRDGILKTE. Positions 569 to 582 are enriched in basic and acidic residues; it reads GMTRQREEVRREGR. A disordered region spans residues 569–662; it reads GMTRQREEVR…KNSESKLLET (94 aa). A compositionally biased stretch (acidic residues) spans 613–644; sequence VPGDDEEEEDDDDDDDDDEEEGEQDDEEEEDG. Low complexity predominate over residues 645–654; the sequence is SSTSMSSSKN.

This sequence belongs to the EFG1/PHD1/stuA family.

The protein localises to the nucleus. Functionally, transcription factor that regulates filamentous growth through repression of EFG1. Regulates the level of colonizing fungi, favoring commensalism as opposed to candidiasis. The polypeptide is Transcriptional regulator EFH1 (EFH1) (Candida albicans (strain SC5314 / ATCC MYA-2876) (Yeast)).